Consider the following 152-residue polypeptide: Small ribosomal subunit protein uS11 (152 aa).

It belongs to the universal ribosomal protein uS11 family. Component of the small ribosomal subunit. Part of the small subunit (SSU) processome, composed of more than 70 proteins and the RNA chaperone small nucleolar RNA (snoRNA) U3.

The protein resides in the cytoplasm. Its subcellular location is the nucleus. It is found in the nucleolus. Component of the small ribosomal subunit. The ribosome is a large ribonucleoprotein complex responsible for the synthesis of proteins in the cell. Part of the small subunit (SSU) processome, first precursor of the small eukaryotic ribosomal subunit. During the assembly of the SSU processome in the nucleolus, many ribosome biogenesis factors, an RNA chaperone and ribosomal proteins associate with the nascent pre-rRNA and work in concert to generate RNA folding, modifications, rearrangements and cleavage as well as targeted degradation of pre-ribosomal RNA by the RNA exosome. This Caenorhabditis elegans protein is Small ribosomal subunit protein uS11 (rps-14).